The following is a 232-amino-acid chain: Ubiquinone biosynthesis O-methyltransferase (232 aa).

S-adenosyl-L-methionine is bound by residues Arg-36, Gly-55, Asp-76, and Met-120.

The protein belongs to the methyltransferase superfamily. UbiG/COQ3 family.

The catalysed reaction is a 3-demethylubiquinol + S-adenosyl-L-methionine = a ubiquinol + S-adenosyl-L-homocysteine + H(+). It carries out the reaction a 3-(all-trans-polyprenyl)benzene-1,2-diol + S-adenosyl-L-methionine = a 2-methoxy-6-(all-trans-polyprenyl)phenol + S-adenosyl-L-homocysteine + H(+). It participates in cofactor biosynthesis; ubiquinone biosynthesis. Functionally, O-methyltransferase that catalyzes the 2 O-methylation steps in the ubiquinone biosynthetic pathway. This Paraburkholderia phytofirmans (strain DSM 17436 / LMG 22146 / PsJN) (Burkholderia phytofirmans) protein is Ubiquinone biosynthesis O-methyltransferase.